The chain runs to 321 residues: Phosphate acyltransferase (321 aa).

Belongs to the PlsX family. Homodimer. Probably interacts with PlsY.

It localises to the cytoplasm. The enzyme catalyses a fatty acyl-[ACP] + phosphate = an acyl phosphate + holo-[ACP]. It functions in the pathway lipid metabolism; phospholipid metabolism. Catalyzes the reversible formation of acyl-phosphate (acyl-PO(4)) from acyl-[acyl-carrier-protein] (acyl-ACP). This enzyme utilizes acyl-ACP as fatty acyl donor, but not acyl-CoA. The chain is Phosphate acyltransferase from Chlamydia trachomatis serovar L2 (strain ATCC VR-902B / DSM 19102 / 434/Bu).